A 241-amino-acid chain; its full sequence is Microneme antigen (241 aa).

An N-terminal signal peptide occupies residues 1-34 (MRLPIRFPKYVLYGMASAVWSILFLHILVGDTMS). Positions 35–103 (AADALSWSGG…ATGRGPSFVH (69 aa)) are excised as a propeptide. Residues 61-83 (HEMGKELEQQHGAEEQQMQRDTK) are compositionally biased toward basic and acidic residues. Residues 61-92 (HEMGKELEQQHGAEEQQMQRDTKPAAFSNPPH) are disordered. PAN domains follow at residues 112 to 181 (CFPH…PRSC) and 185 to 241 (CTDN…FNKS). Disulfide bonds link Cys112–Cys181, Cys137–Cys159, Cys141–Cys147, Cys185–Cys189, Cys210–Cys230, and Cys214–Cys220. Ser121 is an a carbohydrate binding site. Positions 162, 169, and 174 each coordinate a carbohydrate.

It belongs to the microneme antigen family. In terms of assembly, homodimer or heterodimer of major microneme antigen and microneme antigen. Contains six disulfide bonds.

The protein resides in the cytoplasmic vesicle. It localises to the secretory vesicle. The protein localises to the microneme. Functionally, galactose-binding lectin. Plays a role in adhesion to the host cell. Has a potential role in invasion of host cells. The chain is Microneme antigen from Sarcocystis muris.